We begin with the raw amino-acid sequence, 498 residues long: ATP synthase subunit beta, chloroplastic (498 aa).

172 to 179 contacts ATP; the sequence is GGAGVGKT.

Belongs to the ATPase alpha/beta chains family. F-type ATPases have 2 components, CF(1) - the catalytic core - and CF(0) - the membrane proton channel. CF(1) has five subunits: alpha(3), beta(3), gamma(1), delta(1), epsilon(1). CF(0) has four main subunits: a(1), b(1), b'(1) and c(9-12).

It localises to the plastid. Its subcellular location is the chloroplast thylakoid membrane. It carries out the reaction ATP + H2O + 4 H(+)(in) = ADP + phosphate + 5 H(+)(out). Its function is as follows. Produces ATP from ADP in the presence of a proton gradient across the membrane. The catalytic sites are hosted primarily by the beta subunits. The chain is ATP synthase subunit beta, chloroplastic from Drimys granadensis.